We begin with the raw amino-acid sequence, 480 residues long: MLTKVLSKEVKPCLACPICTNPFKDATTISECLHTFCRSCIRNKFINERVNACPVCNVNLGVFPLEKLRSDCTWQDLKLKIYRAMMESLKKAGPKTVAASVKSSKKKRKSRTSLRVSSSRVSSSPDTPLEPANVVVEPPNVVVEEKHRETVLALQSTRKPIITFQKRGRKASLPKKIDSKPEPELPPKEPKIKNLFDLNNEPEDNGLDEAEGSTFQEVVPKEKDLCKPIFSLSVTLNINDTPPDIVEPEISSDDDTEESVEPIQNKCVVNRETKEVPVQVNQNSLLISSDRDREDNSGQKLKTNGAATSRSRKKKGKKPVEKSYSLRPRIGRRTVNPAAGTTTPEAPVSVEEEMKVEEGRNNNPVWFSLKPSKTQNIEMLLPPITACCIRVKDSNMTVSYLKKYLMVKLGLESEDQVEIWLRDEPVCSSLTLHNLVDWWVQTTPLPERQSAMVGSSAAEFIMDLYYSFKSDASDSGSASE.

The RING-type zinc-finger motif lies at 16–57; sequence CPICTNPFKDATTISECLHTFCRSCIRNKFINERVNACPVCN. Disordered regions lie at residues 93–133, 167–193, 241–261, and 280–356; these read GPKT…EPAN, RGRKASLPKKIDSKPEPELPPKEPKIK, TPPDIVEPEISSDDDTEESVE, and VNQN…EMKV. Basic residues predominate over residues 103–112; that stretch reads SSKKKRKSRT. Positions 113–133 are enriched in low complexity; it reads SLRVSSSRVSSSPDTPLEPAN. Over residues 175–193 the composition is skewed to basic and acidic residues; it reads KKIDSKPEPELPPKEPKIK. Residues 246–260 are compositionally biased toward acidic residues; it reads VEPEISSDDDTEESV. Residues 298-309 show a composition bias toward polar residues; that stretch reads GQKLKTNGAATS.

The catalysed reaction is S-ubiquitinyl-[E2 ubiquitin-conjugating enzyme]-L-cysteine + [acceptor protein]-L-lysine = [E2 ubiquitin-conjugating enzyme]-L-cysteine + N(6)-ubiquitinyl-[acceptor protein]-L-lysine.. It functions in the pathway protein modification; protein ubiquitination. This is Probable E3 ubiquitin protein ligase DRIPH from Arabidopsis thaliana (Mouse-ear cress).